A 578-amino-acid chain; its full sequence is Triokinase/FMN cyclase (578 aa).

The 328-residue stretch at 9-336 (SVAGCADDAL…IDAETTASAW (328 aa)) folds into the DhaK domain. Residues 56–59 (GSGH), K109, and D114 each bind dihydroxyacetone. H221 (tele-hemiaminal-histidine intermediate) is an active-site residue. Position 350 is a phosphoserine (S350). One can recognise a DhaL domain in the interval 372–571 (KQMVLVLEWV…AAAILRAILE (200 aa)). Residues 401 to 404 (DGDC), 446 to 447 (SS), G486, and 494 to 495 (TM) contribute to the ATP site. Residues S511 and S545 each carry the phosphoserine modification. Residue 556–558 (DPG) coordinates ATP.

Homodimer. Interacts with IFIH1 (via the CARD domains), the interaction is inhibited by viral infection. The cofactor is Mg(2+). Requires Mn(2+) as cofactor. Co(2+) is required as a cofactor.

It catalyses the reaction dihydroxyacetone + ATP = dihydroxyacetone phosphate + ADP + H(+). It carries out the reaction D-glyceraldehyde + ATP = D-glyceraldehyde 3-phosphate + ADP + H(+). The catalysed reaction is FAD = riboflavin cyclic-4',5'-phosphate + AMP + H(+). Its activity is regulated as follows. Each activity is inhibited by the substrate(s) of the other. Functionally, catalyzes both the phosphorylation of dihydroxyacetone and of glyceraldehyde, and the splitting of ribonucleoside diphosphate-X compounds among which FAD is the best substrate. Represses IFIH1-mediated cellular antiviral response. This is Triokinase/FMN cyclase (TKFC) from Bos taurus (Bovine).